The primary structure comprises 399 residues: Formate-dependent phosphoribosylglycinamide formyltransferase (399 aa).

Residues 21-22 (EL) and glutamate 81 each bind N(1)-(5-phospho-beta-D-ribosyl)glycinamide. Residues arginine 114, lysine 156, 161–166 (SSGKGQ), 196–199 (EGFI), and glutamate 204 contribute to the ATP site. Positions 119 to 314 (RLAAEELGLP…EFELHARAIL (196 aa)) constitute an ATP-grasp domain. Mg(2+) is bound by residues glutamate 273 and glutamate 285. N(1)-(5-phospho-beta-D-ribosyl)glycinamide contacts are provided by residues aspartate 292, lysine 361, and 368-369 (RR). The tract at residues 370–399 (MGVAVANGESTDQARERAKLAASKVRPTRT) is disordered.

It belongs to the PurK/PurT family. In terms of assembly, homodimer.

The enzyme catalyses N(1)-(5-phospho-beta-D-ribosyl)glycinamide + formate + ATP = N(2)-formyl-N(1)-(5-phospho-beta-D-ribosyl)glycinamide + ADP + phosphate + H(+). Its pathway is purine metabolism; IMP biosynthesis via de novo pathway; N(2)-formyl-N(1)-(5-phospho-D-ribosyl)glycinamide from N(1)-(5-phospho-D-ribosyl)glycinamide (formate route): step 1/1. Its function is as follows. Involved in the de novo purine biosynthesis. Catalyzes the transfer of formate to 5-phospho-ribosyl-glycinamide (GAR), producing 5-phospho-ribosyl-N-formylglycinamide (FGAR). Formate is provided by PurU via hydrolysis of 10-formyl-tetrahydrofolate. This is Formate-dependent phosphoribosylglycinamide formyltransferase from Dechloromonas aromatica (strain RCB).